The primary structure comprises 274 residues: Pyrroline-5-carboxylate reductase 3 (274 aa).

N-acetylalanine is present on A2.

It belongs to the pyrroline-5-carboxylate reductase family. In terms of assembly, homodecamer; composed of 5 homodimers.

Its subcellular location is the cytoplasm. The enzyme catalyses L-proline + NADP(+) = (S)-1-pyrroline-5-carboxylate + NADPH + 2 H(+). It carries out the reaction L-proline + NAD(+) = (S)-1-pyrroline-5-carboxylate + NADH + 2 H(+). Its pathway is amino-acid biosynthesis; L-proline biosynthesis; L-proline from L-glutamate 5-semialdehyde: step 1/1. In terms of biological role, oxidoreductase that catalyzes the last step in proline biosynthesis, which corresponds to the reduction of pyrroline-5-carboxylate (P5C) to L-proline using NAD(P)H. Proline is synthesized from either glutamate or ornithine; both are converted to P5C, and then to proline via pyrroline-5-carboxylate reductases (PYCRs). PYCR3 is exclusively linked to the biosynthesis of proline from ornithine. This is Pyrroline-5-carboxylate reductase 3 from Rattus norvegicus (Rat).